The following is a 39-amino-acid chain: Cygnin (39 aa).

Gln1 carries the pyrrolidone carboxylic acid modification. Cystine bridges form between Cys6-Cys33, Cys12-Cys28, and Cys16-Cys32.

Belongs to the transferrin family.

The sequence is that of Cygnin from Cygnus atratus (Black swan).